The following is a 673-amino-acid chain: Cyclic nucleotide-binding domain-containing protein 2 (673 aa).

Positions 1–15 are enriched in polar residues; sequence MNRSANPEAASSTSH. Residues 1–89 are disordered; that stretch reads MNRSANPEAA…PQPKDRPGVQ (89 aa). Over residues 43 to 86 the composition is skewed to basic and acidic residues; that stretch reads PADKSDTTESKSESGSDSRSEEDKESPASIKEIKAETPQPKDRP. Residue 206 to 329 coordinates a nucleoside 3',5'-cyclic phosphate; the sequence is CYRSYTESLQ…ETQYRYNFFR (124 aa).

In terms of tissue distribution, testis-specific. Exclusively expressed in testicular germ cells while it is not present in mature sperm (at protein level).

It localises to the cytoplasm. It is found in the cytosol. Its function is as follows. Essential for male fertility. Plays an important role in spermatogenesis and regulates sperm motility by controlling the development of the flagellar bending of sperm. The protein is Cyclic nucleotide-binding domain-containing protein 2 (Cnbd2) of Mus musculus (Mouse).